The following is a 102-amino-acid chain: MYAIVRSGGRQHKVAVGDVVEIDKVADEAGSSIELTPLLVVDGESVTSDKDVLGKVKVTAEVLGETKGPKIRILKYKNKTGYKKRQGHRQKYTQVKVTGIEG.

It belongs to the bacterial ribosomal protein bL21 family. In terms of assembly, part of the 50S ribosomal subunit. Contacts protein L20.

This protein binds to 23S rRNA in the presence of protein L20. In Cutibacterium acnes (strain DSM 16379 / KPA171202) (Propionibacterium acnes), this protein is Large ribosomal subunit protein bL21.